The primary structure comprises 72 residues: UPF0270 protein plu0398 (72 aa).

It belongs to the UPF0270 family.

This Photorhabdus laumondii subsp. laumondii (strain DSM 15139 / CIP 105565 / TT01) (Photorhabdus luminescens subsp. laumondii) protein is UPF0270 protein plu0398.